Here is a 381-residue protein sequence, read N- to C-terminus: Chaperone protein DnaJ (381 aa).

The 66-residue stretch at 5–70 (DFYEVLGVSR…QKKAAYDQYG (66 aa)) folds into the J domain. A CR-type zinc finger spans residues 136 to 214 (GVSKEIEVPT…CHGQGRKQKT (79 aa)). Positions 149, 152, 166, 169, 188, 191, 202, and 205 each coordinate Zn(2+). CXXCXGXG motif repeat units follow at residues 149–156 (CDTCEGTG), 166–173 (CGTCHGHG), 188–195 (CPTCHGKG), and 202–209 (CNVCHGQG).

The protein belongs to the DnaJ family. Homodimer. Zn(2+) serves as cofactor.

It is found in the cytoplasm. Participates actively in the response to hyperosmotic and heat shock by preventing the aggregation of stress-denatured proteins and by disaggregating proteins, also in an autonomous, DnaK-independent fashion. Unfolded proteins bind initially to DnaJ; upon interaction with the DnaJ-bound protein, DnaK hydrolyzes its bound ATP, resulting in the formation of a stable complex. GrpE releases ADP from DnaK; ATP binding to DnaK triggers the release of the substrate protein, thus completing the reaction cycle. Several rounds of ATP-dependent interactions between DnaJ, DnaK and GrpE are required for fully efficient folding. Also involved, together with DnaK and GrpE, in the DNA replication of plasmids through activation of initiation proteins. This Vibrio vulnificus (strain CMCP6) protein is Chaperone protein DnaJ.